A 76-amino-acid chain; its full sequence is Kappa-actitoxin-Avd4e (76 aa).

A signal peptide spans 1–19; sequence MNKALFLCLVVLCAAVVFA. Residues 20 to 31 constitute a propeptide that is removed on maturation; the sequence is AEDLQKAKHAPF. Cystine bridges form between Cys37–Cys72, Cys39–Cys65, and Cys55–Cys73. Positions 45 to 47 match the Cell attachment site motif; sequence RGD.

This sequence belongs to the sea anemone type 3 (BDS) potassium channel toxin family. As to expression, moderately expressed in the ectodermal tissue from the distal and proximal tentacles, body wall, and oral disk.

The protein resides in the secreted. It localises to the nematocyst. Functionally, is member of a fraction that shows antiangiogenic activity, since it inhibits human microvascular endothelial cells (HMEC) tubulogenesis. This protein could be a kunitz-type inhibitor with a RGD motif that could block angiogenesis in binding on integrins. Blocks Kv3 voltage-gated potassium channels. Reduces blood pressure. The polypeptide is Kappa-actitoxin-Avd4e (Anemonia viridis (Snakelocks anemone)).